Here is a 92-residue protein sequence, read N- to C-terminus: Sec-independent protein translocase protein TatA (92 aa).

A helical transmembrane segment spans residues 2-22; that stretch reads IPANFGGTELIILLVIILLLF. Positions 43–92 are disordered; it reads KGTSGAYEELEEKKGEEEKDEGGKKEAEASGRGEEEQQARAAGEAGRKQG. The span at 53–80 shows a compositional bias: basic and acidic residues; the sequence is EEKKGEEEKDEGGKKEAEASGRGEEEQQ.

It belongs to the TatA/E family. In terms of assembly, the Tat system comprises two distinct complexes: a TatABC complex, containing multiple copies of TatA, TatB and TatC subunits, and a separate TatA complex, containing only TatA subunits. Substrates initially bind to the TatABC complex, which probably triggers association of the separate TatA complex to form the active translocon.

The protein resides in the cell membrane. In terms of biological role, part of the twin-arginine translocation (Tat) system that transports large folded proteins containing a characteristic twin-arginine motif in their signal peptide across membranes. TatA could form the protein-conducting channel of the Tat system. In Rubrobacter xylanophilus (strain DSM 9941 / JCM 11954 / NBRC 16129 / PRD-1), this protein is Sec-independent protein translocase protein TatA.